A 250-amino-acid chain; its full sequence is tRNA (guanine-N(1)-)-methyltransferase (250 aa).

Residues Gly-115 and 135-140 (LGDFVL) contribute to the S-adenosyl-L-methionine site.

Belongs to the RNA methyltransferase TrmD family. In terms of assembly, homodimer.

It localises to the cytoplasm. It carries out the reaction guanosine(37) in tRNA + S-adenosyl-L-methionine = N(1)-methylguanosine(37) in tRNA + S-adenosyl-L-homocysteine + H(+). In terms of biological role, specifically methylates guanosine-37 in various tRNAs. The sequence is that of tRNA (guanine-N(1)-)-methyltransferase from Legionella pneumophila subsp. pneumophila (strain Philadelphia 1 / ATCC 33152 / DSM 7513).